The sequence spans 378 residues: Protein KlaB (378 aa).

Belongs to the TelA family.

Functionally, belongs to the kla operon, which is associated with cryptic tellurite resistance, and IncW plasmid fertility inhibition. This is Protein KlaB (klaB) from Escherichia coli.